A 246-amino-acid polypeptide reads, in one-letter code: 3-oxoacyl-[acyl-carrier-protein] reductase FabG (246 aa).

Residues 11–14, serine 36, 62–63, and asparagine 89 each bind NADP(+); these read GASR and DV. Residue serine 141 participates in substrate binding. The active-site Proton acceptor is tyrosine 154. NADP(+) contacts are provided by residues 154 to 158 and isoleucine 187; that span reads YVAAK.

Belongs to the short-chain dehydrogenases/reductases (SDR) family. Homotetramer.

The enzyme catalyses a (3R)-hydroxyacyl-[ACP] + NADP(+) = a 3-oxoacyl-[ACP] + NADPH + H(+). It functions in the pathway lipid metabolism; fatty acid biosynthesis. Catalyzes the NADPH-dependent reduction of beta-ketoacyl-ACP substrates to beta-hydroxyacyl-ACP products, the first reductive step in the elongation cycle of fatty acid biosynthesis. This Bacillus subtilis (strain 168) protein is 3-oxoacyl-[acyl-carrier-protein] reductase FabG (fabG).